Reading from the N-terminus, the 153-residue chain is Protein SprT-like (153 aa).

Positions Leu6 to Glu148 constitute a SprT-like domain. A Zn(2+)-binding site is contributed by His67. Residue Glu68 is part of the active site. Residue His71 participates in Zn(2+) binding.

Belongs to the SprT family. It depends on Zn(2+) as a cofactor.

The protein resides in the cytoplasm. This is Protein SprT-like from Bacillus licheniformis (strain ATCC 14580 / DSM 13 / JCM 2505 / CCUG 7422 / NBRC 12200 / NCIMB 9375 / NCTC 10341 / NRRL NRS-1264 / Gibson 46).